The following is a 459-amino-acid chain: Cytosolic carboxypeptidase 6 (459 aa).

The region spanning 142–418 is the Peptidase M14 domain; sequence IPYTYGQMQI…AFCRALLNFY (277 aa). His-204, Glu-207, and His-302 together coordinate Zn(2+). Glu-376 functions as the Proton donor/acceptor in the catalytic mechanism.

The protein belongs to the peptidase M14 family. Zn(2+) is required as a cofactor. Expressed in labial and amphid neurons.

Its subcellular location is the cytoplasm. It catalyses the reaction (L-glutamyl)(n+1)-gamma-L-glutamyl-L-glutamyl-[protein] + H2O = (L-glutamyl)(n)-gamma-L-glutamyl-L-glutamyl-[protein] + L-glutamate. Metallocarboxypeptidase that catalyzes the removing of polyglutamate side chains that are present on the gamma-carboxyl group of glutamate residues of tubulin in sensory cilia. Probably via the deglutamylation of tubulin, promotes microtubule stability required for axon regrowth after injury. Also regulates microtubule dynamics in uterine muscle cells. The sequence is that of Cytosolic carboxypeptidase 6 from Caenorhabditis elegans.